The following is a 999-amino-acid chain: Sarcoplasmic/endoplasmic reticulum calcium ATPase 3 (999 aa).

Residue methionine 1 is modified to N-acetylmethionine. The Cytoplasmic portion of the chain corresponds to 1–48; the sequence is MEEAHLLPAADVLRRFSVTAEGGLSPAQVTRARERYGPNELPTEEGKS. Phosphoserine is present on serine 17. A Phosphothreonine modification is found at threonine 19. Serine 25 is modified (phosphoserine). Residues 49–69 traverse the membrane as a helical segment; the sequence is LWELVLEQFEDLLVRILLLAA. The Extracellular segment spans residues 70–89; sequence LVSFVLACFEEGEETTTAFV. A helical membrane pass occupies residues 90 to 110; sequence EPLVIVLILVANAVVGVWQER. The Cytoplasmic portion of the chain corresponds to 111 to 253; sequence NAENAIEALK…PERTPLQQKL (143 aa). A helical membrane pass occupies residues 254–273; the sequence is DEFGRQLSRAISVICMAVWV. The Extracellular portion of the chain corresponds to 274–295; sequence INIGHFADPAHGGSWLRGAVYY. Residues 296–313 traverse the membrane as a helical segment; that stretch reads FKIAVALAVAAIPEGLPA. Residues valine 304, alanine 305, isoleucine 307, and glutamate 309 each coordinate Ca(2+). The Cytoplasmic portion of the chain corresponds to 314-757; sequence VITTCLALGT…EEGRAIYSNM (444 aa). The active-site 4-aspartylphosphate intermediate is the aspartate 351. Positions 351 and 353 each coordinate Mg(2+). Threonine 353 lines the ATP pocket. Residues 370 to 400 form an interaction with phospholamban 1 region; that stretch reads AEAEAGTCRLHEFTISGTTYAPEGEVRQGEQ. Phosphothreonine is present on threonine 415. ATP-binding residues include glutamate 442, arginine 489, lysine 515, arginine 560, threonine 625, glycine 626, and aspartate 627. Position 662 is a phosphoserine (serine 662). The ATP site is built by arginine 678 and lysine 684. Aspartate 703 serves as a coordination point for Mg(2+). Asparagine 706 lines the ATP pocket. Residues 758-777 form a helical membrane-spanning segment; that stretch reads KQFIRYLISSNVGEVVCIFL. The Ca(2+) site is built by asparagine 768 and glutamate 771. At 778–787 the chain is on the extracellular side; the sequence is TAILGLPEAL. A helical transmembrane segment spans residues 788–808; sequence IPVQLLWVNLVTDGLPATALG. An interaction with phospholamban 2 region spans residues 788–808; it reads IPVQLLWVNLVTDGLPATALG. 3 residues coordinate Ca(2+): asparagine 796, threonine 799, and aspartate 800. Residues 809–828 lie on the Cytoplasmic side of the membrane; it reads FNPPDLDIMEKRPRNPREAL. Residues 829 to 851 traverse the membrane as a helical segment; sequence ISGWLFFRYLAIGVYVGLATVAA. The Extracellular portion of the chain corresponds to 852-897; sequence ATWWFLYDAEGPQVTFYQLRNFLKCSEDNPLFTGTDCEVFESRFPT. Cysteine 876 and cysteine 888 are oxidised to a cystine. A helical membrane pass occupies residues 898 to 917; that stretch reads TMALSVLVTTEMCNALNSVS. Residue glutamate 908 coordinates Ca(2+). Residues 918 to 930 are Cytoplasmic-facing; that stretch reads ENQSLLRMPPWLN. The chain crosses the membrane as a helical span at residues 931–949; sequence PWLLAAVAMSMALHFLILL. Topologically, residues 950 to 964 are extracellular; sequence VPPLPLIFQVTPLSG. The helical transmembrane segment at 965-985 threads the bilayer; it reads RQWVVVLQISLPVILLDEALK. Residues 986 to 999 are Cytoplasmic-facing; it reads YLSRKHVDEEKGRQ.

This sequence belongs to the cation transport ATPase (P-type) (TC 3.A.3) family. Type IIA subfamily. As to quaternary structure, interacts with sarcolipin (SLN). Interacts with phospholamban (PLN). Interacts with myoregulin (MRLN). Interacts with DWORF. Interacts with VMP1. Interacts with TUNAR; the interaction occurs at low levels in low glucose conditions and is increased by high glucose levels. It depends on Mg(2+) as a cofactor. As to expression, expressed in endothelial tissues.

It localises to the endoplasmic reticulum membrane. Its subcellular location is the sarcoplasmic reticulum membrane. The catalysed reaction is Ca(2+)(in) + ATP + H2O = Ca(2+)(out) + ADP + phosphate + H(+). With respect to regulation, inhibited by sarcolipin (SLN), phospholamban (PLN) and myoregulin (MRLN). Enhanced by DWORF; DWORF increases activity by displacing sarcolipin (SLN), phospholamban (PLN) and myoregulin (MRLN). Its function is as follows. This magnesium-dependent enzyme catalyzes the hydrolysis of ATP coupled with the transport of calcium. Transports calcium ions from the cytosol into the sarcoplasmic/endoplasmic reticulum lumen. Contributes to calcium sequestration involved in muscular excitation/contraction. This chain is Sarcoplasmic/endoplasmic reticulum calcium ATPase 3 (ATP2A3), found in Sus scrofa (Pig).